Consider the following 113-residue polypeptide: Large ribosomal subunit protein eL33 (113 aa).

This sequence belongs to the eukaryotic ribosomal protein eL33 family.

The polypeptide is Large ribosomal subunit protein eL33 (RPL35A) (Tetrahymena thermophila (strain SB210)).